A 92-amino-acid polypeptide reads, in one-letter code: YcgL domain-containing protein Sama_1929 (92 aa).

A YcgL domain is found at 1–85 (MICAVYKSSR…PKDNLLTQHR (85 aa)).

The chain is YcgL domain-containing protein Sama_1929 from Shewanella amazonensis (strain ATCC BAA-1098 / SB2B).